The sequence spans 688 residues: MAKNFLIELGTEELPPTALRSLAEAFASNFEAELKAADLAHQGVKWYATPRRLALKVAELAESQADKVVEKRGPAVSAAFDADGNPTKAAQGWARGNGITVEQAERLKTDKGEWLLHKEEVKGKPVQELVVDFAAKALAGLPIPKAMRWGNSDIQFIRPVKTLTILLGDELIEGSILGVSSARTLRGHRFMGESEFTIDSADQYPAILEERGKVMADYDARKAIILADSEKAAAAVGGKADLEDDLVEEVTSLVEWPVVLTAKFEEEFLKVPSEALVYTMKGDQKYFPVYDENKKLLPNFIFVSNIESKEPRHVIEGNEKVVRPRLADAEFFFNTDRKRPLIDRLPELEQAIFQKQLGTIKDKTDRITELAGYIAEQIGADVEKSQRAGLLAKCDLMTSMVFEFTDTQGVMGMHYATHDGEDEQVALALYEQYMPRFAGDDLPSTDISASVAMADKLDTLVGIFGIGQAPKGSDPFALRRAALGVLRIIVEKEYNLDLVDLVAKAQSLFGDKLSNANVATDVIDFMLGRFRAWYQDEGFSVDIIQAVLARRPTKPADFDKRVKAVSHFRELDAAESLAAANKRVGNILAKFDGELAQEIDLALLQEDAEKALAEKVEILAEALEPVFAAGNYQEALSRLAELREPVDAFFDNVMVMADDEALKTNRLTLLNKLRNLFLDIADISLLQK.

Belongs to the class-II aminoacyl-tRNA synthetase family. In terms of assembly, tetramer of two alpha and two beta subunits.

Its subcellular location is the cytoplasm. It catalyses the reaction tRNA(Gly) + glycine + ATP = glycyl-tRNA(Gly) + AMP + diphosphate. The polypeptide is Glycine--tRNA ligase beta subunit (Aliivibrio fischeri (strain MJ11) (Vibrio fischeri)).